The sequence spans 95 residues: Phosphoribosyl-ATP pyrophosphatase (95 aa).

The protein belongs to the PRA-PH family.

It is found in the cytoplasm. It catalyses the reaction 1-(5-phospho-beta-D-ribosyl)-ATP + H2O = 1-(5-phospho-beta-D-ribosyl)-5'-AMP + diphosphate + H(+). Its pathway is amino-acid biosynthesis; L-histidine biosynthesis; L-histidine from 5-phospho-alpha-D-ribose 1-diphosphate: step 2/9. The sequence is that of Phosphoribosyl-ATP pyrophosphatase from Methanocella arvoryzae (strain DSM 22066 / NBRC 105507 / MRE50).